Here is a 134-residue protein sequence, read N- to C-terminus: MVSLGLVVARFNDSVTEPMAEAAREAATDRDAVIVDEVSVPGAYDSPLAADRLARRDDVDAVAVVGAIVTGDTDHDHVIASATADKLTQVSLDRDTPVTFGVSGPGMSGAEARERIDKGADAAEAAIDLADELD.

5-amino-6-(D-ribitylamino)uracil is bound by residues F11, 43-45 (AYD), and 67-69 (AIV). A (2S)-2-hydroxy-3-oxobutyl phosphate-binding site is contributed by 72–73 (DT). Catalysis depends on H75, which acts as the Proton donor. A 5-amino-6-(D-ribitylamino)uracil-binding site is contributed by F100. Residue R115 participates in (2S)-2-hydroxy-3-oxobutyl phosphate binding.

The protein belongs to the DMRL synthase family.

The enzyme catalyses (2S)-2-hydroxy-3-oxobutyl phosphate + 5-amino-6-(D-ribitylamino)uracil = 6,7-dimethyl-8-(1-D-ribityl)lumazine + phosphate + 2 H2O + H(+). The protein operates within cofactor biosynthesis; riboflavin biosynthesis; riboflavin from 2-hydroxy-3-oxobutyl phosphate and 5-amino-6-(D-ribitylamino)uracil: step 1/2. Functionally, catalyzes the formation of 6,7-dimethyl-8-ribityllumazine by condensation of 5-amino-6-(D-ribitylamino)uracil with 3,4-dihydroxy-2-butanone 4-phosphate. This is the penultimate step in the biosynthesis of riboflavin. The sequence is that of 6,7-dimethyl-8-ribityllumazine synthase from Halorubrum lacusprofundi (strain ATCC 49239 / DSM 5036 / JCM 8891 / ACAM 34).